The sequence spans 69 residues: Copper chaperone CopZ (69 aa).

An HMA domain is found at 2–68; that stretch reads EQKTLQVEGM…AIEDQGYDVA (67 aa). The Cu cation site is built by cysteine 13 and cysteine 16.

In terms of assembly, monomer in the absence of copper. Homodimer in the presence of copper ions. Forms a heterodimer (electrostatic interactions) with CopA during the transfer of Cu(+).

It is found in the cytoplasm. Its function is as follows. Chaperone that serves for the intracellular sequestration and transport of Cu(+). Delivers Cu(+) to the copper-transporting ATPase CopA. Functions in E.coli to transfer Cu(+) to CopA missing its first metal-binding domain. This Bacillus subtilis (strain 168) protein is Copper chaperone CopZ (copZ).